The chain runs to 2314 residues: Protein Ycf2 (2314 aa).

Position 1653-1660 (1653-1660 (GSIGTGRS)) interacts with ATP.

This sequence belongs to the Ycf2 family.

Its subcellular location is the plastid. It is found in the chloroplast stroma. Probable ATPase of unknown function. Its presence in a non-photosynthetic plant (Epifagus virginiana) and experiments in tobacco indicate that it has an essential function which is probably not related to photosynthesis. The protein is Protein Ycf2 of Piper cenocladum (Ant piper).